The following is a 631-amino-acid chain: Chaperone protein HtpG (631 aa).

An a; substrate-binding region spans residues 1–339 (MSAQKETLGF…SNDLPLNVSR (339 aa)). A b region spans residues 340-556 (EILQESKDID…EHDMSAHLER (217 aa)). The interval 557–631 (MLKAAGQKIE…INKLMLELSV (75 aa)) is c.

Belongs to the heat shock protein 90 family. As to quaternary structure, homodimer.

It is found in the cytoplasm. Molecular chaperone. Has ATPase activity. This is Chaperone protein HtpG from Chromobacterium violaceum (strain ATCC 12472 / DSM 30191 / JCM 1249 / CCUG 213 / NBRC 12614 / NCIMB 9131 / NCTC 9757 / MK).